Here is a 29-residue protein sequence, read N- to C-terminus: Cycloviolacin-O21 (29 aa).

A cross-link (cyclopeptide (Gly-Asn)) is located at residues 1 to 29 (GLPVCGETCVTGSCYTPGCTCSWPVCTRN). Cystine bridges form between Cys-5–Cys-19, Cys-9–Cys-21, and Cys-14–Cys-26.

Post-translationally, this is a cyclic peptide. Expressed in leaves, petals, petioles, and runners but not in roots (at protein level).

Functionally, probably participates in a plant defense mechanism. In Viola odorata (Sweet violet), this protein is Cycloviolacin-O21.